We begin with the raw amino-acid sequence, 341 residues long: Eukaryotic translation initiation factor 3 subunit I (341 aa).

WD repeat units follow at residues 8-49, 50-91, 135-184, 189-228, and 286-325; these read GHER…GTYR, GHQG…KTWD, QSDE…LLYN, ELNQ…VLKS, and GHFG…YDFL.

Belongs to the eIF-3 subunit I family. Component of the eukaryotic translation initiation factor 3 (eIF-3) complex.

It localises to the cytoplasm. Component of the eukaryotic translation initiation factor 3 (eIF-3) complex, which is involved in protein synthesis of a specialized repertoire of mRNAs and, together with other initiation factors, stimulates binding of mRNA and methionyl-tRNAi to the 40S ribosome. The eIF-3 complex specifically targets and initiates translation of a subset of mRNAs involved in cell proliferation. The sequence is that of Eukaryotic translation initiation factor 3 subunit I from Chaetomium globosum (strain ATCC 6205 / CBS 148.51 / DSM 1962 / NBRC 6347 / NRRL 1970) (Soil fungus).